A 670-amino-acid chain; its full sequence is Auxin response factor 16 (670 aa).

A DNA-binding region (TF-B3) is located at residues 120 to 222 (FAKTLTQSDA…DLCVGIRRAK (103 aa)). Polar residues predominate over residues 545–557 (KTQISSGGSNQNG). The interval 545 to 579 (KTQISSGGSNQNGVAGREFSSSDEGSPCSKKVHDA) is disordered. Residues 584 to 664 (TGHCKVFMES…RRLTILTEQG (81 aa)) form the PB1 domain.

This sequence belongs to the ARF family. Homodimers and heterodimers.

The protein resides in the nucleus. In terms of biological role, auxin response factors (ARFs) are transcriptional factors that bind specifically to the DNA sequence 5'-TGTCTC-3' found in the auxin-responsive promoter elements (AuxREs). Could act as transcriptional activator or repressor. Formation of heterodimers with Aux/IAA proteins may alter their ability to modulate early auxin response genes expression. The protein is Auxin response factor 16 (ARF16) of Arabidopsis thaliana (Mouse-ear cress).